The following is a 142-amino-acid chain: Transcription antitermination protein NusB (142 aa).

It belongs to the NusB family.

Functionally, involved in transcription antitermination. Required for transcription of ribosomal RNA (rRNA) genes. Binds specifically to the boxA antiterminator sequence of the ribosomal RNA (rrn) operons. The chain is Transcription antitermination protein NusB from Thermotoga petrophila (strain ATCC BAA-488 / DSM 13995 / JCM 10881 / RKU-1).